The sequence spans 344 residues: Protein RecA (344 aa).

An ATP-binding site is contributed by 65–72 (GPESSGKT).

The protein belongs to the RecA family.

The protein localises to the cytoplasm. Can catalyze the hydrolysis of ATP in the presence of single-stranded DNA, the ATP-dependent uptake of single-stranded DNA by duplex DNA, and the ATP-dependent hybridization of homologous single-stranded DNAs. It interacts with LexA causing its activation and leading to its autocatalytic cleavage. This Campylobacter lari protein is Protein RecA.